The chain runs to 128 residues: Cytochrome c oxidase subunit 5B, mitochondrial (128 aa).

Residues 1 to 30 constitute a mitochondrion transit peptide; it reads MASRLLRGVGALAAQALRRTARGAAVTRSM. Residues K67 and K85 each carry the N6-acetyllysine modification. Zn(2+)-binding residues include C90, C92, C112, and C115. K120 carries the N6-acetyllysine modification.

Belongs to the cytochrome c oxidase subunit 5B family. In terms of assembly, component of the cytochrome c oxidase (complex IV, CIV), a multisubunit enzyme composed of 14 subunits. The complex is composed of a catalytic core of 3 subunits MT-CO1, MT-CO2 and MT-CO3, encoded in the mitochondrial DNA, and 11 supernumerary subunits COX4I, COX5A, COX5B, COX6A, COX6B, COX6C, COX7A, COX7B, COX7C, COX8 and NDUFA4, which are encoded in the nuclear genome. The complex exists as a monomer or a dimer and forms supercomplexes (SCs) in the inner mitochondrial membrane with NADH-ubiquinone oxidoreductase (complex I, CI) and ubiquinol-cytochrome c oxidoreductase (cytochrome b-c1 complex, complex III, CIII), resulting in different assemblies (supercomplex SCI(1)III(2)IV(1) and megacomplex MCI(2)III(2)IV(2)).

It localises to the mitochondrion inner membrane. It functions in the pathway energy metabolism; oxidative phosphorylation. Functionally, component of the cytochrome c oxidase, the last enzyme in the mitochondrial electron transport chain which drives oxidative phosphorylation. The respiratory chain contains 3 multisubunit complexes succinate dehydrogenase (complex II, CII), ubiquinol-cytochrome c oxidoreductase (cytochrome b-c1 complex, complex III, CIII) and cytochrome c oxidase (complex IV, CIV), that cooperate to transfer electrons derived from NADH and succinate to molecular oxygen, creating an electrochemical gradient over the inner membrane that drives transmembrane transport and the ATP synthase. Cytochrome c oxidase is the component of the respiratory chain that catalyzes the reduction of oxygen to water. Electrons originating from reduced cytochrome c in the intermembrane space (IMS) are transferred via the dinuclear copper A center (CU(A)) of subunit 2 and heme A of subunit 1 to the active site in subunit 1, a binuclear center (BNC) formed by heme A3 and copper B (CU(B)). The BNC reduces molecular oxygen to 2 water molecules using 4 electrons from cytochrome c in the IMS and 4 protons from the mitochondrial matrix. In Mus musculus (Mouse), this protein is Cytochrome c oxidase subunit 5B, mitochondrial (Cox5b).